We begin with the raw amino-acid sequence, 356 residues long: Phosphatidylglycerol--prolipoprotein diacylglyceryl transferase (356 aa).

A run of 4 helical transmembrane segments spans residues 24–44 (IKWY…LACV), 59–79 (WFVF…SFII), 103–123 (LAIE…FPLV), and 144–164 (VSMW…QIIG). An a 1,2-diacyl-sn-glycero-3-phospho-(1'-sn-glycerol)-binding site is contributed by Arg165. Transmembrane regions (helical) follow at residues 209 to 229 (PFFL…YIGG) and 265 to 285 (FATS…LLVC).

Belongs to the Lgt family.

It is found in the cell membrane. It catalyses the reaction L-cysteinyl-[prolipoprotein] + a 1,2-diacyl-sn-glycero-3-phospho-(1'-sn-glycerol) = an S-1,2-diacyl-sn-glyceryl-L-cysteinyl-[prolipoprotein] + sn-glycerol 1-phosphate + H(+). It functions in the pathway protein modification; lipoprotein biosynthesis (diacylglyceryl transfer). In terms of biological role, catalyzes the transfer of the diacylglyceryl group from phosphatidylglycerol to the sulfhydryl group of the N-terminal cysteine of a prolipoprotein, the first step in the formation of mature lipoproteins. This chain is Phosphatidylglycerol--prolipoprotein diacylglyceryl transferase, found in Malacoplasma penetrans (strain HF-2) (Mycoplasma penetrans).